Reading from the N-terminus, the 334-residue chain is Phospholipase A1 2 (334 aa).

A signal peptide spans 1 to 23 (MMNLKYLLFFCLVQALHYCYAYG). Positions 24–33 (DPSLSNELDR) are excised as a propeptide. Residues Cys-37 and Cys-120 are joined by a disulfide bond. The active-site Nucleophile is Ser-170. Asp-198 acts as the Charge relay system in catalysis. Intrachain disulfides connect Cys-209-Cys-214 and Cys-252-Cys-261. His-263 acts as the Charge relay system in catalysis. 3 disulfides stabilise this stretch: Cys-278/Cys-302, Cys-279/Cys-327, and Cys-295/Cys-300.

This sequence belongs to the AB hydrolase superfamily. Lipase family. In terms of processing, not glycosylated. Expressed by the venom gland.

It localises to the secreted. The enzyme catalyses a 1,2-diacyl-sn-glycero-3-phosphocholine + H2O = a 2-acyl-sn-glycero-3-phosphocholine + a fatty acid + H(+). Its function is as follows. Catalyzes the hydrolysis of phosphatidylcholine with phospholipase A1 activity (6.3 U/ml). May act as an allergen and induce hemolytic activity. In Vespa affinis (Lesser banded hornet), this protein is Phospholipase A1 2.